The chain runs to 1235 residues: JNK-interacting protein 3 (1235 aa).

The disordered stretch occupies residues methionine 1 to tyrosine 22. In terms of domain architecture, RH1 spans glutamate 25–alanine 113. The stretch at arginine 84–leucine 184 forms a coiled coil. A disordered region spans residues glycine 278 to asparagine 325. The span at aspartate 282–proline 293 shows a compositional bias: polar residues. The span at glutamine 294–proline 307 shows a compositional bias: pro residues. Residues glycine 366–alanine 493 adopt a coiled-coil conformation. Positions arginine 456–isoleucine 526 constitute an RH2 domain. Disordered regions lie at residues asparagine 520–alanine 572, lysine 813–alanine 852, and proline 869–serine 897. Over residues glycine 529–serine 543 the composition is skewed to gly residues. Low complexity-rich tracts occupy residues proline 544–serine 555 and asparagine 821–glutamine 830. Polar residues predominate over residues arginine 874–serine 897.

It belongs to the JIP scaffold family. In terms of assembly, forms homo- and heterooligomeric complexes. Binds the TPR motif-containing C-terminal of kinesin light chain, Klc. Pre-assembled syd scaffolding complexes are then transported as a cargo of kinesin, to the required subcellular location.

The protein localises to the cytoplasm. Functionally, the JNK-interacting protein (JIP) group of scaffold proteins selectively mediates JNK-signaling by aggregating specific components of the MAPK cascade to form a functional JNK signaling module. May function as a regulator of vesicle transport, through interactions with the JNK-signaling components and motor proteins. Syd is required for efficient kinesin-I mediated axonal transport. The polypeptide is JNK-interacting protein 3 (Drosophila pseudoobscura pseudoobscura (Fruit fly)).